Reading from the N-terminus, the 194-residue chain is dTTP/UTP pyrophosphatase (194 aa).

D73 acts as the Proton acceptor in catalysis.

It belongs to the Maf family. YhdE subfamily. Requires a divalent metal cation as cofactor.

Its subcellular location is the cytoplasm. It catalyses the reaction dTTP + H2O = dTMP + diphosphate + H(+). The enzyme catalyses UTP + H2O = UMP + diphosphate + H(+). Nucleoside triphosphate pyrophosphatase that hydrolyzes dTTP and UTP. May have a dual role in cell division arrest and in preventing the incorporation of modified nucleotides into cellular nucleic acids. This chain is dTTP/UTP pyrophosphatase, found in Clostridium botulinum (strain Okra / Type B1).